A 453-amino-acid polypeptide reads, in one-letter code: tRNA modification GTPase MnmE (453 aa).

The (6S)-5-formyl-5,6,7,8-tetrahydrofolate site is built by arginine 22, glutamate 79, and lysine 119. The TrmE-type G domain maps to 215 to 376 (GMKVVIAGRP…LRQHLKECMG (162 aa)). Asparagine 225 is a binding site for K(+). GTP-binding positions include 225-230 (NAGKSS), 244-250 (TDIAGTT), 269-272 (DTAG), and 334-337 (NKAD). Serine 229 is a Mg(2+) binding site. Residues threonine 244, isoleucine 246, and threonine 249 each coordinate K(+). Threonine 250 contributes to the Mg(2+) binding site. Lysine 453 contacts (6S)-5-formyl-5,6,7,8-tetrahydrofolate.

This sequence belongs to the TRAFAC class TrmE-Era-EngA-EngB-Septin-like GTPase superfamily. TrmE GTPase family. In terms of assembly, homodimer. Heterotetramer of two MnmE and two MnmG subunits. K(+) is required as a cofactor.

The protein localises to the cytoplasm. Exhibits a very high intrinsic GTPase hydrolysis rate. Involved in the addition of a carboxymethylaminomethyl (cmnm) group at the wobble position (U34) of certain tRNAs, forming tRNA-cmnm(5)s(2)U34. The chain is tRNA modification GTPase MnmE from Vibrio cholerae serotype O1 (strain ATCC 39541 / Classical Ogawa 395 / O395).